A 319-amino-acid chain; its full sequence is Probable metallo-hydrolase YqjP (319 aa).

Positions 67, 69, 71, 72, 165, 184, and 231 each coordinate Zn(2+).

It belongs to the metallo-beta-lactamase superfamily. Zn(2+) serves as cofactor.

The polypeptide is Probable metallo-hydrolase YqjP (yqjP) (Bacillus subtilis (strain 168)).